The chain runs to 180 residues: Ribosome maturation factor RimM (180 aa).

In terms of domain architecture, PRC barrel spans 99–172; sequence EDEFYQVDLI…FLVVDPVAAG (74 aa).

Belongs to the RimM family. Binds ribosomal protein uS19.

It localises to the cytoplasm. In terms of biological role, an accessory protein needed during the final step in the assembly of 30S ribosomal subunit, possibly for assembly of the head region. Essential for efficient processing of 16S rRNA. May be needed both before and after RbfA during the maturation of 16S rRNA. It has affinity for free ribosomal 30S subunits but not for 70S ribosomes. This chain is Ribosome maturation factor RimM, found in Bartonella henselae (strain ATCC 49882 / DSM 28221 / CCUG 30454 / Houston 1) (Rochalimaea henselae).